The primary structure comprises 145 residues: 3-hydroxyacyl-[acyl-carrier-protein] dehydratase FabZ (145 aa).

His-49 is an active-site residue.

It belongs to the thioester dehydratase family. FabZ subfamily.

The protein localises to the cytoplasm. The enzyme catalyses a (3R)-hydroxyacyl-[ACP] = a (2E)-enoyl-[ACP] + H2O. Involved in unsaturated fatty acids biosynthesis. Catalyzes the dehydration of short chain beta-hydroxyacyl-ACPs and long chain saturated and unsaturated beta-hydroxyacyl-ACPs. The protein is 3-hydroxyacyl-[acyl-carrier-protein] dehydratase FabZ of Rickettsia felis (strain ATCC VR-1525 / URRWXCal2) (Rickettsia azadi).